Consider the following 78-residue polypeptide: Small ribosomal subunit protein bS20 (78 aa).

The protein belongs to the bacterial ribosomal protein bS20 family.

In terms of biological role, binds directly to 16S ribosomal RNA. This chain is Small ribosomal subunit protein bS20, found in Streptococcus pneumoniae serotype 4 (strain ATCC BAA-334 / TIGR4).